Reading from the N-terminus, the 143-residue chain is Ribosome maturation factor RimP (143 aa).

The protein belongs to the RimP family.

It localises to the cytoplasm. In terms of biological role, required for maturation of 30S ribosomal subunits. The sequence is that of Ribosome maturation factor RimP from Neisseria gonorrhoeae (strain ATCC 700825 / FA 1090).